The chain runs to 438 residues: Serine--tRNA ligase (438 aa).

L-serine is bound at residue 245–247 (TAE). 276 to 278 (RSE) contacts ATP. Residue glutamate 299 participates in L-serine binding. 363 to 366 (EISS) is a binding site for ATP. Serine 398 serves as a coordination point for L-serine.

This sequence belongs to the class-II aminoacyl-tRNA synthetase family. Type-1 seryl-tRNA synthetase subfamily. In terms of assembly, homodimer. The tRNA molecule binds across the dimer.

The protein resides in the cytoplasm. The catalysed reaction is tRNA(Ser) + L-serine + ATP = L-seryl-tRNA(Ser) + AMP + diphosphate + H(+). It catalyses the reaction tRNA(Sec) + L-serine + ATP = L-seryl-tRNA(Sec) + AMP + diphosphate + H(+). It functions in the pathway aminoacyl-tRNA biosynthesis; selenocysteinyl-tRNA(Sec) biosynthesis; L-seryl-tRNA(Sec) from L-serine and tRNA(Sec): step 1/1. Its function is as follows. Catalyzes the attachment of serine to tRNA(Ser). Is also able to aminoacylate tRNA(Sec) with serine, to form the misacylated tRNA L-seryl-tRNA(Sec), which will be further converted into selenocysteinyl-tRNA(Sec). This chain is Serine--tRNA ligase, found in Delftia acidovorans (strain DSM 14801 / SPH-1).